The primary structure comprises 197 residues: Molybdenum cofactor guanylyltransferase (197 aa).

GTP contacts are provided by residues 10–12, K23, N51, D69, and D99; that span reads LAG. D99 provides a ligand contact to Mg(2+).

The protein belongs to the MobA family. In terms of assembly, monomer. Mg(2+) is required as a cofactor.

It localises to the cytoplasm. It carries out the reaction Mo-molybdopterin + GTP + H(+) = Mo-molybdopterin guanine dinucleotide + diphosphate. Functionally, transfers a GMP moiety from GTP to Mo-molybdopterin (Mo-MPT) cofactor (Moco or molybdenum cofactor) to form Mo-molybdopterin guanine dinucleotide (Mo-MGD) cofactor. This Shewanella sp. (strain ANA-3) protein is Molybdenum cofactor guanylyltransferase.